The following is a 227-amino-acid chain: ATP-dependent dethiobiotin synthetase BioD (227 aa).

Residue 13–18 (DVGKTV) participates in ATP binding. Threonine 17 contributes to the Mg(2+) binding site. The active site involves lysine 38. ATP-binding positions include aspartate 55, 116–119 (EGAG), 176–177 (NR), and 205–207 (PYI). Aspartate 55 and glutamate 116 together coordinate Mg(2+).

This sequence belongs to the dethiobiotin synthetase family. Homodimer. Requires Mg(2+) as cofactor.

Its subcellular location is the cytoplasm. The enzyme catalyses (7R,8S)-7,8-diammoniononanoate + CO2 + ATP = (4R,5S)-dethiobiotin + ADP + phosphate + 3 H(+). It participates in cofactor biosynthesis; biotin biosynthesis; biotin from 7,8-diaminononanoate: step 1/2. Functionally, catalyzes a mechanistically unusual reaction, the ATP-dependent insertion of CO2 between the N7 and N8 nitrogen atoms of 7,8-diaminopelargonic acid (DAPA, also called 7,8-diammoniononanoate) to form a ureido ring. This Vibrio vulnificus (strain CMCP6) protein is ATP-dependent dethiobiotin synthetase BioD.